The primary structure comprises 373 residues: MGYLLEETLSSNSKTPIVIDDDNELGLMAVRLANAAAFPMVLKAALELGVFDTLYAEASRSDSFLSPSEIASKLPTTPRNPEAPVLLDRMLRLLASYSVVKCGKVSEGKGERVYRAEPICRFFLKDNIQDIGSLASQVIVNFDSVFLNTWAQLKDVVLEGGDAFGRAHGGMKLFDYMGTDERFSKLFNQTGFTIAVVKKALEVYQGFKGVNVLVDVGGGVGNTLGVVASKYPNIKGINFDLTCALAQAPSYPGVEHVAGDMFVDVPTGDAMILKRILHDWTDEDCVKILKNCWKSLPESGKVVVIELVTPDEAENGDINANIAFDMDMLMFTQCSGGKERSRAEFEALAAASGFTHCKFVCQAYHCWIIEFCK.

5 residues coordinate S-adenosyl-L-homocysteine: G217, D240, D260, M261, and K274. H278 (proton acceptor) is an active-site residue.

The protein belongs to the class I-like SAM-binding methyltransferase superfamily. Cation-independent O-methyltransferase family. In terms of assembly, interacts with B'GAMMA.

The protein operates within secondary metabolite biosynthesis. Its function is as follows. Involved in indole glucosinolate biosynthesis. Catalyzes methoxylation reactions of the glucosinolate indole ring. Converts the hydroxy intermediates 4-hydroxy-indol-3-yl-methylglucosinolate (4OH-I3M) and 1-hydroxy-indol-3-yl-methylglucosinolate (1OH-I3M) to 4-methoxy-indol-3-yl-methylglucosinolate (4MO-I3M) and 1-methoxy-indol-3-yl-methylglucosinolate(1MO-I3M), respectively. In Arabidopsis thaliana (Mouse-ear cress), this protein is Indole glucosinolate O-methyltransferase 4.